Here is a 532-residue protein sequence, read N- to C-terminus: Flavin-containing monooxygenase 3 (532 aa).

FAD is bound by residues 9 to 13, E32, 40 to 41, and 61 to 62; these read GAGVS, LW, and NS. Residues 60–61 and 195–198 contribute to the NADP(+) site; these read TN and SGCD. At S401 the chain carries Phosphoserine. Residues 512-532 traverse the membrane as a helical segment; sequence CHLVKLFVLPVLFIAVFLALI.

It belongs to the FMO family. The cofactor is FAD.

Its subcellular location is the microsome membrane. It localises to the endoplasmic reticulum membrane. It catalyses the reaction trimethylamine + NADPH + O2 = trimethylamine N-oxide + NADP(+) + H2O. The catalysed reaction is N,N-dimethylaniline + NADPH + O2 + H(+) = N,N-dimethylaniline N-oxide + NADP(+) + H2O. The enzyme catalyses hypotaurine + NADPH + O2 + H(+) = taurine + NADP(+) + H2O. It carries out the reaction (S)-nicotine + NADPH + O2 = trans-(S)-nicotine N(1')-oxide + NADP(+) + H2O. It catalyses the reaction albendazole + NADPH + O2 + H(+) = albendazole S-oxide + NADP(+) + H2O. Essential hepatic enzyme that catalyzes the oxygenation of a wide variety of nitrogen- and sulfur-containing compounds including drugs as well as dietary compounds. Plays an important role in the metabolism of trimethylamine (TMA), via the production of trimethylamine N-oxide (TMAO) metabolite. TMA is generated by the action of gut microbiota using dietary precursors such as choline, choline containing compounds, betaine or L-carnitine. By regulating TMAO concentration, FMO3 directly impacts both platelet responsiveness and rate of thrombus formation. The sequence is that of Flavin-containing monooxygenase 3 (FMO3) from Canis lupus familiaris (Dog).